Reading from the N-terminus, the 130-residue chain is Small ribosomal subunit protein uS9 (130 aa).

Residues 102–130 form a disordered region; it reads GLLTRDSRMKERKKPGLKGARRAPQFSKR. Residues 111–130 are compositionally biased toward basic residues; it reads KERKKPGLKGARRAPQFSKR.

The protein belongs to the universal ribosomal protein uS9 family.

In Listeria monocytogenes serovar 1/2a (strain ATCC BAA-679 / EGD-e), this protein is Small ribosomal subunit protein uS9.